Here is a 357-residue protein sequence, read N- to C-terminus: Spore coat protein I (357 aa).

Belongs to the CotS family.

It localises to the spore coat. The polypeptide is Spore coat protein I (cotI) (Bacillus subtilis (strain 168)).